We begin with the raw amino-acid sequence, 181 residues long: Adenylate kinase (181 aa).

Position 10–15 (10–15) interacts with ATP; that stretch reads GAGKGT. The tract at residues 30-59 is NMP; the sequence is STGDLFRANIGQATALGVEAKKYIDAGELV. AMP is bound by residues Thr31, Arg36, 57–59, 85–88, and Gln92; these read ELV and GFPR. The tract at residues 126 to 132 is LID; it reads ARGRADD. Position 127 (Arg127) interacts with ATP. The AMP site is built by Arg129 and Arg140. Residue Gly166 participates in ATP binding.

The protein belongs to the adenylate kinase family. In terms of assembly, monomer.

The protein resides in the cytoplasm. It catalyses the reaction AMP + ATP = 2 ADP. The protein operates within purine metabolism; AMP biosynthesis via salvage pathway; AMP from ADP: step 1/1. Catalyzes the reversible transfer of the terminal phosphate group between ATP and AMP. Plays an important role in cellular energy homeostasis and in adenine nucleotide metabolism. This is Adenylate kinase from Rhodococcus erythropolis (strain PR4 / NBRC 100887).